A 761-amino-acid chain; its full sequence is Prolyl oligopeptidase A (761 aa).

Active-site charge relay system residues include S606, D690, and H726.

It belongs to the peptidase S9A family. In terms of assembly, monomer.

The enzyme catalyses Hydrolysis of Pro-|-Xaa &gt;&gt; Ala-|-Xaa in oligopeptides.. Housekeeping prolyl oligopeptidase (POP) that behaves like a conventional POP by cleaving peptide bonds on the C-terminal side of prolyl residues within peptides that are up to approximately 30 amino acids long. The polypeptide is Prolyl oligopeptidase A (Amanita bisporigera (Destroying angel)).